The sequence spans 724 residues: 4-alpha-glucanotransferase (724 aa).

Belongs to the disproportionating enzyme family.

The protein localises to the cytoplasm. The catalysed reaction is Transfers a segment of a (1-&gt;4)-alpha-D-glucan to a new position in an acceptor, which may be glucose or a (1-&gt;4)-alpha-D-glucan.. This chain is 4-alpha-glucanotransferase (malQ), found in Mycobacterium bovis (strain ATCC BAA-935 / AF2122/97).